The following is a 271-amino-acid chain: 5'-nucleotidase SurE (271 aa).

A divalent metal cation contacts are provided by D14, D15, S46, and N104.

It belongs to the SurE nucleotidase family. A divalent metal cation serves as cofactor.

It localises to the cytoplasm. The enzyme catalyses a ribonucleoside 5'-phosphate + H2O = a ribonucleoside + phosphate. Nucleotidase that shows phosphatase activity on nucleoside 5'-monophosphates. The chain is 5'-nucleotidase SurE from Gloeothece citriformis (strain PCC 7424) (Cyanothece sp. (strain PCC 7424)).